Reading from the N-terminus, the 273-residue chain is Hydroxyethylthiazole kinase (273 aa).

Met49 contacts substrate. Arg125 and Thr171 together coordinate ATP. Position 198 (Gly198) interacts with substrate.

The protein belongs to the Thz kinase family. Mg(2+) serves as cofactor.

The catalysed reaction is 5-(2-hydroxyethyl)-4-methylthiazole + ATP = 4-methyl-5-(2-phosphooxyethyl)-thiazole + ADP + H(+). It participates in cofactor biosynthesis; thiamine diphosphate biosynthesis; 4-methyl-5-(2-phosphoethyl)-thiazole from 5-(2-hydroxyethyl)-4-methylthiazole: step 1/1. Its function is as follows. Catalyzes the phosphorylation of the hydroxyl group of 4-methyl-5-beta-hydroxyethylthiazole (THZ). This Desulforudis audaxviator (strain MP104C) protein is Hydroxyethylthiazole kinase.